A 574-amino-acid polypeptide reads, in one-letter code: ATP-grasp enzyme fsqD (574 aa).

One can recognise an ATP-grasp domain in the interval 234–462 (NKFLTSKYVG…YWGLAAVLGV (229 aa)). Position 263–318 (263–318 (ALPYPLIVKPCDGWSSEGVSRVESPDAFPAAVKSIDTSRHGTEFVMEPYCDGPEVD)) interacts with ATP. Mg(2+) is bound by residues glutamate 394, glutamate 431, and asparagine 433. Mn(2+) is bound by residues glutamate 394, glutamate 431, and asparagine 433.

It depends on Mg(2+) as a cofactor. The cofactor is Mn(2+).

It functions in the pathway secondary metabolite biosynthesis. Its function is as follows. ATP-grasp enzyme; part of the gene cluster that mediates the biosynthesis of the isoquinoline alkaloids fumisoquin A, fumisoquin B and fumisoquin C; as well as small amounts of fumipyrrole as a shunt metabolite. The products of the cluster lead to a brown coloration and are important for growth and conidiation. The nonribosomal peptide synthetase-like protein fsqF, which lacks a canonical condensation domain, is required for addition of a serine-derived dehydroalanine moiety to activated tyrosine but is not essential for the subsequent steps leading to isoquinoline formation. A different enzyme, most likely the ATP-grasp enzyme fsqD, is responsible for activation of tyrosine. Three additional enzymes encoded by the fsq cluster, the N-methyltransferase fsqC, the phenol 2-monooxygenase fsqG and the FAD-dependent oxidase fsqB, catalyze the formation of the isoquinoline ring system in the fumisoquins. FsqB converts the fspF thiolation domain-bound (2S,4S,5S)-2-amino-6-(3,4-dihydroxyphenyl)-4-hydroxy-5-(methylamino)hexanoyl into isoquinoline. The cyclization most likely proceeds via a two-step mechanism, beginning with FAD-dependent oxidation of the methyl group to an iminium species followed by electrophilic attack on the deprotonated phenol. This Aspergillus fumigatus (strain ATCC MYA-4609 / CBS 101355 / FGSC A1100 / Af293) (Neosartorya fumigata) protein is ATP-grasp enzyme fsqD.